A 191-amino-acid polypeptide reads, in one-letter code: Outer membrane lipoprotein DolP (191 aa).

A signal peptide spans 1 to 18; the sequence is MKAFSPLAVLISALLLQG. The N-palmitoyl cysteine moiety is linked to residue Cys-19. Cys-19 carries the S-diacylglycerol cysteine lipid modification. BON domains are found at residues 46–115 and 124–191; these read DDGT…RQGQ and NDTW…TYIK.

The protein belongs to the lipoprotein DolP family.

Its subcellular location is the cell outer membrane. In terms of biological role, plays an important role in maintaining outer membrane integrity. Contributes to virulence. This chain is Outer membrane lipoprotein DolP, found in Salmonella typhimurium (strain LT2 / SGSC1412 / ATCC 700720).